Here is a 502-residue protein sequence, read N- to C-terminus: Cyclin-dependent kinase 19 (502 aa).

Met-1 carries the post-translational modification N-acetylmethionine. In terms of domain architecture, Protein kinase spans 21–335 (EYEGCKVGRG…SEQALQDPYF (315 aa)). ATP is bound by residues 27–35 (VGRGTYGHV) and Lys-52. The Proton acceptor role is filled by Asp-151. The disordered stretch occupies residues 359-502 (LNEDDPEEKG…YHPSHQAHRY (144 aa)). The span at 371-392 (NQQQQQNQHQQPTAPPQQAAAP) shows a compositional bias: low complexity. Gly residues predominate over residues 408 to 421 (TAGGAGAGVGGTGA). Over residues 424-435 (QHSQDSSLNQVP) the composition is skewed to polar residues. Residue Ser-449 is modified to Phosphoserine. A compositionally biased stretch (polar residues) spans 458–467 (YQHSSSRLNY). Low complexity predominate over residues 468–496 (QSSVQGSSQSQSTLGYSSSSQQSSQYHPS).

Belongs to the protein kinase superfamily. CMGC Ser/Thr protein kinase family. CDC2/CDKX subfamily.

It localises to the cytoplasm. It is found in the perinuclear region. The protein resides in the nucleus. The catalysed reaction is L-seryl-[protein] + ATP = O-phospho-L-seryl-[protein] + ADP + H(+). The enzyme catalyses L-threonyl-[protein] + ATP = O-phospho-L-threonyl-[protein] + ADP + H(+). The polypeptide is Cyclin-dependent kinase 19 (CDK19) (Homo sapiens (Human)).